Reading from the N-terminus, the 179-residue chain is Large ribosomal subunit protein uL5 (179 aa).

Belongs to the universal ribosomal protein uL5 family. In terms of assembly, part of the 50S ribosomal subunit; part of the 5S rRNA/L5/L18/L25 subcomplex. Contacts the 5S rRNA and the P site tRNA. Forms a bridge to the 30S subunit in the 70S ribosome.

In terms of biological role, this is one of the proteins that bind and probably mediate the attachment of the 5S RNA into the large ribosomal subunit, where it forms part of the central protuberance. In the 70S ribosome it contacts protein S13 of the 30S subunit (bridge B1b), connecting the 2 subunits; this bridge is implicated in subunit movement. Contacts the P site tRNA; the 5S rRNA and some of its associated proteins might help stabilize positioning of ribosome-bound tRNAs. The protein is Large ribosomal subunit protein uL5 of Prochlorococcus marinus (strain MIT 9215).